Reading from the N-terminus, the 165-residue chain is Protein-export protein SecB (165 aa).

It belongs to the SecB family. In terms of assembly, homotetramer, a dimer of dimers. One homotetramer interacts with 1 SecA dimer.

It localises to the cytoplasm. Functionally, one of the proteins required for the normal export of preproteins out of the cell cytoplasm. It is a molecular chaperone that binds to a subset of precursor proteins, maintaining them in a translocation-competent state. It also specifically binds to its receptor SecA. This is Protein-export protein SecB from Colwellia psychrerythraea (strain 34H / ATCC BAA-681) (Vibrio psychroerythus).